We begin with the raw amino-acid sequence, 338 residues long: Phosphate transport system permease protein PstC 1 (338 aa).

8 helical membrane passes run 19–39, 93–113, 123–143, 144–164, 181–201, 232–252, 254–274, and 295–315; these read GGIGAVIPLLALVLVLVVLVI, TSAIALIIAVPVSVGAALVIV, AVGIVLELLAGIPSVVVGLWG, AMTFGPFIAHHIAPVIAHNAP, GMLVSGLVLAVMVVPIIATTT, LPWVSSGIVGAVVLGLGRALG, TMAVAMVSGAVLGAMPANIYA, and TNFAVKTLAEVGLVLMVITLL. One can recognise an ABC transmembrane type-1 domain in the interval 87-320; that stretch reads IVGTLATSAI…VITLLTNVAA (234 aa).

The protein belongs to the binding-protein-dependent transport system permease family. CysTW subfamily.

It localises to the cell membrane. Its function is as follows. Part of the binding-protein-dependent transport system for phosphate; probably responsible for the translocation of the substrate across the membrane. The polypeptide is Phosphate transport system permease protein PstC 1 (pstC1) (Mycobacterium bovis (strain ATCC BAA-935 / AF2122/97)).